We begin with the raw amino-acid sequence, 624 residues long: Polygalacturonase 1 beta-like protein 2 (624 aa).

Residues M1–A26 form the signal peptide. The stretch at F121–Y124 is one FXXY 1 repeat. N128 is a glycosylation site (N-linked (GlcNAc...) asparagine). FXXY repeat units lie at residues F129 to Y132, F143 to Y146, F157 to Y160, F171 to Y174, F185 to Y188, F199 to Y202, F213 to Y216, F227 to Y230, F241 to Y244, F255 to Y258, and F269 to Y272. N145 carries an N-linked (GlcNAc...) asparagine glycan. The interval F199–K219 is disordered. N280 carries N-linked (GlcNAc...) asparagine glycosylation. FXXY repeat units follow at residues F283–Y286, F297–Y300, F311–Y314, F325–Y328, and F339–Y342. The N-linked (GlcNAc...) asparagine glycan is linked to N352. One copy of the FXXY 18 repeat lies at F353–Y356. N364 carries an N-linked (GlcNAc...) asparagine glycan. 3 FXXY repeats span residues F367–Y370, F376–Y379, and F386–Y389. Residues N392 and N463 are each glycosylated (N-linked (GlcNAc...) asparagine). The BURP domain maps to F409–I623.

Expressed in flowers and stems.

The protein resides in the secreted. It localises to the extracellular space. It is found in the apoplast. The protein localises to the cell wall. Involved in cell size determination. The chain is Polygalacturonase 1 beta-like protein 2 from Arabidopsis thaliana (Mouse-ear cress).